We begin with the raw amino-acid sequence, 807 residues long: Phenylalanine--tRNA ligase beta subunit (807 aa).

The tRNA-binding domain occupies 39–153 (SARAQGVVVG…SLPPNGSPVA (115 aa)). In terms of domain architecture, B5 spans 407 to 491 (AEAGPVLLRR…RLVGFDRFGA (85 aa)). Mg(2+) contacts are provided by Asp469, Asp475, Glu478, and Glu479. The 94-residue stretch at 713 to 806 (PTVPFSERDL…LSKQFQAELR (94 aa)) folds into the FDX-ACB domain.

The protein belongs to the phenylalanyl-tRNA synthetase beta subunit family. Type 1 subfamily. Tetramer of two alpha and two beta subunits. Mg(2+) serves as cofactor.

It is found in the cytoplasm. It catalyses the reaction tRNA(Phe) + L-phenylalanine + ATP = L-phenylalanyl-tRNA(Phe) + AMP + diphosphate + H(+). This Synechococcus sp. (strain CC9605) protein is Phenylalanine--tRNA ligase beta subunit.